The chain runs to 246 residues: Probable transcriptional regulatory protein Ent638_2432 (246 aa).

Belongs to the TACO1 family.

Its subcellular location is the cytoplasm. In Enterobacter sp. (strain 638), this protein is Probable transcriptional regulatory protein Ent638_2432.